The sequence spans 208 residues: Small ribosomal subunit protein uS2 (208 aa).

This sequence belongs to the universal ribosomal protein uS2 family.

The sequence is that of Small ribosomal subunit protein uS2 from Pyrobaculum calidifontis (strain DSM 21063 / JCM 11548 / VA1).